Reading from the N-terminus, the 543-residue chain is Thermosome subunit beta (543 aa).

Residues 522–543 (TKSSSSSSNPPKSGSSSESSED) form a disordered region. Low complexity predominate over residues 523 to 543 (KSSSSSSNPPKSGSSSESSED).

It belongs to the TCP-1 chaperonin family. As to quaternary structure, forms a Heterooligomeric complex of two stacked eight-membered rings. The N-terminus is blocked.

Its function is as follows. Molecular chaperone; binds unfolded polypeptides in vitro, and has a weak ATPase activity. In Thermoplasma acidophilum (strain ATCC 25905 / DSM 1728 / JCM 9062 / NBRC 15155 / AMRC-C165), this protein is Thermosome subunit beta (thsB).